A 209-amino-acid chain; its full sequence is Uridine kinase (209 aa).

16–23 (GGSGSGKT) provides a ligand contact to ATP.

The protein belongs to the uridine kinase family.

It is found in the cytoplasm. The catalysed reaction is uridine + ATP = UMP + ADP + H(+). It carries out the reaction cytidine + ATP = CMP + ADP + H(+). It participates in pyrimidine metabolism; CTP biosynthesis via salvage pathway; CTP from cytidine: step 1/3. It functions in the pathway pyrimidine metabolism; UMP biosynthesis via salvage pathway; UMP from uridine: step 1/1. This is Uridine kinase from Lactiplantibacillus plantarum (strain ATCC BAA-793 / NCIMB 8826 / WCFS1) (Lactobacillus plantarum).